The primary structure comprises 359 residues: GTP cyclohydrolase FolE2 (359 aa).

Belongs to the GTP cyclohydrolase IV family.

It carries out the reaction GTP + H2O = 7,8-dihydroneopterin 3'-triphosphate + formate + H(+). The protein operates within cofactor biosynthesis; 7,8-dihydroneopterin triphosphate biosynthesis; 7,8-dihydroneopterin triphosphate from GTP: step 1/1. In terms of biological role, converts GTP to 7,8-dihydroneopterin triphosphate. The sequence is that of GTP cyclohydrolase FolE2 from Cereibacter sphaeroides (strain KD131 / KCTC 12085) (Rhodobacter sphaeroides).